Reading from the N-terminus, the 151-residue chain is Deoxyuridine 5'-triphosphate nucleotidohydrolase (151 aa).

Residues 70–72, N83, 87–89, and M97 contribute to the substrate site; these read RSG and LID.

This sequence belongs to the dUTPase family. Requires Mg(2+) as cofactor.

It carries out the reaction dUTP + H2O = dUMP + diphosphate + H(+). The protein operates within pyrimidine metabolism; dUMP biosynthesis; dUMP from dCTP (dUTP route): step 2/2. In terms of biological role, this enzyme is involved in nucleotide metabolism: it produces dUMP, the immediate precursor of thymidine nucleotides and it decreases the intracellular concentration of dUTP so that uracil cannot be incorporated into DNA. This chain is Deoxyuridine 5'-triphosphate nucleotidohydrolase, found in Pasteurella multocida (strain Pm70).